Reading from the N-terminus, the 93-residue chain is UPF0298 protein lwe2074 (93 aa).

Belongs to the UPF0298 family.

The protein resides in the cytoplasm. The protein is UPF0298 protein lwe2074 of Listeria welshimeri serovar 6b (strain ATCC 35897 / DSM 20650 / CCUG 15529 / CIP 8149 / NCTC 11857 / SLCC 5334 / V8).